Reading from the N-terminus, the 495-residue chain is Ectonucleoside triphosphate diphosphohydrolase 2 (495 aa).

The Cytoplasmic segment spans residues 1–7; sequence MAGKVRS. A helical membrane pass occupies residues 8–28; sequence LLPPLLLAAAGLAGLLLLCVP. Residues 29-462 are Extracellular-facing; sequence TRDVREPPAL…PGLRKGTDFS (434 aa). N-linked (GlcNAc...) asparagine glycosylation is present at Asn-64. Cys-75 and Cys-99 form a disulfide bridge. Asn-129 carries N-linked (GlcNAc...) asparagine glycosylation. The active-site Proton acceptor is Glu-165. 204–208 lines the ATP pocket; the sequence is GASTQ. Intrachain disulfides connect Cys-242/Cys-284, Cys-265/Cys-310, Cys-323/Cys-328, and Cys-377/Cys-399. N-linked (GlcNAc...) asparagine glycosylation occurs at Asn-294. 2 N-linked (GlcNAc...) asparagine glycosylation sites follow: Asn-378 and Asn-443. The helical transmembrane segment at 463-483 threads the bilayer; that stretch reads SWVVLLLLFASALLAALVLLL. At 484 to 495 the chain is on the cytoplasmic side; the sequence is RQVHSAKLPSTI.

This sequence belongs to the GDA1/CD39 NTPase family. It depends on Ca(2+) as a cofactor. Requires Mg(2+) as cofactor. In terms of tissue distribution, brain, placenta, skeletal muscle, kidney, pancreas, heart, ovary, testis, colon, small intestine, prostate and pancreas. No expression in adult thymus, spleen, lung, liver and peripheral blood leukocytes.

It localises to the cell membrane. The protein localises to the endoplasmic reticulum membrane. In the nervous system, could hydrolyze ATP and other nucleotides to regulate purinergic neurotransmission. Hydrolyzes ADP only to a marginal extent. The order of activity with different substrates is ATP &gt; GTP &gt; CTP = ITP &gt; UTP &gt;&gt; ADP = UDP. This chain is Ectonucleoside triphosphate diphosphohydrolase 2 (ENTPD2), found in Homo sapiens (Human).